The following is a 1563-amino-acid chain: NACHT domain- and WD repeat-containing protein 1 (1563 aa).

One copy of the WD 1 repeat lies at 274–314; sequence TNHQVLEQLRELELARQELGWLYQEIRHHLWQSTESTKVFC. The 331-residue stretch at 336-666 folds into the NACHT domain; the sequence is TPLVLFGPPG…HRQLSQVIQV (331 aa). 342–349 serves as a coordination point for ATP; the sequence is GPPGIGKT. 12 WD repeats span residues 866-905, 908-947, 954-994, 998-1037, 1044-1082, 1126-1165, 1168-1207, 1212-1251, 1253-1292, 1346-1385, 1386-1425, and 1431-1470; these read GCHK…VVHV, GHTA…EKVT, QNPT…LVFC, DVSD…LQEK, KEET…LLEK, EHED…TLLN, EGVG…KLQS, LDRT…EQDC, DTSN…DVLC, QLPE…FPLE, AHGS…GMFE, and SCCR…LLAV. The segment at 1534–1563 is disordered; sequence AAEASQDAEPVAVEGKESKSNKRSQVCLIL.

As to quaternary structure, may interact with HSP90AA1, HSP90AB1 and BAG2.

It localises to the cytoplasm. It is found in the cytosol. May play a role in the control of androgen receptor (AR) protein steady-state levels. This Mus musculus (Mouse) protein is NACHT domain- and WD repeat-containing protein 1 (Nwd1).